The following is an 878-amino-acid chain: MSHPTSTPAFTVADIRKSFLDFFASKGHTVVPSSSLVPGNDPTLMFTNSGMVQFKDVFLGTDKRSYVRAASVQACLRAGGKHNDLENVGYTARHHTFFEMLGNWSFGDYFKRESLKWAWELLTDVYKLPADKLWATVYIDDDEAYDIWTKEIGLPPERVVRIGDNKGAKYASDNFWMMADTGPCGPCSEIFYDHGPEIAGGPPGSPEQDGDRYIEIWNNVFMQFDMQPDGSVKPLPAPCVDTGMGLERLAAILQHVHSNYEIDVFDALIKAAARETGEKDLNNKSLRVIADHIRATAFLVSDGVNPSNEGRGYVQRRIIRRAIRHGYKLGKKTPFFHKLVADLARLMGDAYPKLRTDEARITAVLKAEEERFFETLEIGMTILDTALAGGAKVLPGDVAFKLHDTYGFPLDLSADVCRERGVDVDETGFNAAMDRQKNQARAAGKFKMDRALEYAGSGNTFTGYERLEETAKIVALYADGVPVAALTKGQSGVVVLDTTPFYAESGGQVGDEGELISGSAHFAVGDTLKIKSDVYGHHGTVEQGTLNVGDHVNARVNLAVRAATVRNHSATHLMHKALREVLGEHVQQKGSLVNAERTRFDFAHNAPVTDDQIREIEARVNAEILSNVATDASVMDMEAAQKTGAMMLFGEKYGDKVRVLSIGSSKELCGGTHVTRTGDIGLFKIVAESGVAAGVRRVEAVTGENALAYLQSLESTVQAAAGSLKASPTELQQRIGQVLDQVKSLEKEIAALKGKLASSQGDELMAQAFDVKGLKVLAARLEGADARTLRETMDKLKDKLKTGVFVLAAVDGNKVQIAAGVTADSVTVVKAGELVNFVAQQVGGKGGGKADMAMAGGTDASRLDDALKSVRAWVTERA.

Residues H568, H572, C669, and H673 each contribute to the Zn(2+) site.

It belongs to the class-II aminoacyl-tRNA synthetase family. It depends on Zn(2+) as a cofactor.

It localises to the cytoplasm. The catalysed reaction is tRNA(Ala) + L-alanine + ATP = L-alanyl-tRNA(Ala) + AMP + diphosphate. In terms of biological role, catalyzes the attachment of alanine to tRNA(Ala) in a two-step reaction: alanine is first activated by ATP to form Ala-AMP and then transferred to the acceptor end of tRNA(Ala). Also edits incorrectly charged Ser-tRNA(Ala) and Gly-tRNA(Ala) via its editing domain. This chain is Alanine--tRNA ligase, found in Polaromonas sp. (strain JS666 / ATCC BAA-500).